We begin with the raw amino-acid sequence, 321 residues long: Chlorohydroquinone/hydroquinone 1,2-dioxygenase (321 aa).

VOC domains follow at residues 10 to 138 (GLHH…IIEQ) and 160 to 282 (GFHS…ASVT). Residues His-162, His-229, and Glu-278 each contribute to the Fe cation site.

Belongs to the extradiol ring-cleavage dioxygenase family. The cofactor is Fe(2+).

The catalysed reaction is hydroquinone + O2 = (2E,4Z)-4-hydroxy-6-oxohexa-2,4-dienoate + H(+). It carries out the reaction chlorohydroquinone + O2 = 5-chlorocarbonyl-4-hydroxy-penta-2,4-dienoate + H(+). The protein operates within xenobiotic degradation; gamma-hexachlorocyclohexane degradation. Functionally, cleaves aromatic rings with two hydroxyl groups at para positions with consumption of O(2). Catalyzes the cleavage of chlorohydroquinone (CHQ), as part of the gamma-hexachlorocyclohexane (gamma-HCH or lindane) degradation pathway, producing 5-chlorocarbonyl-4-hydroxy-penta-2,4-dienoate as an intermediate product that can react with water yielding maleylacetate. This degradation pathway allows S.japonicum UT26 to grow on gamma-HCH as the sole source of carbon and energy. Can also use hydroquinone (HQ) as substrate, leading to gamma-hydroxymuconic semialdehyde. Is not able to convert catechol, contrary to meta-cleavage dioxygenases. The sequence is that of Chlorohydroquinone/hydroquinone 1,2-dioxygenase from Sphingobium indicum (strain DSM 16413 / CCM 7287 / MTCC 6362 / UT26 / NBRC 101211 / UT26S) (Sphingobium japonicum).